The chain runs to 311 residues: ADP-ribosyl cyclase/cyclic ADP-ribose hydrolase 2 (311 aa).

A signal peptide spans Met1–Gly24. 3 disulfide bridges follow: Cys46/Cys60, Cys76/Cys156, and Cys137/Cys150. Asn59 and Asn88 each carry an N-linked (GlcNAc...) asparagine glycan. Trp102 is an NAD(+) binding site. Residue Trp102 participates in nicotinamide binding. Asn141 carries an N-linked (GlcNAc...) asparagine glycan. Residue Trp165 coordinates NAD(+). A glycan (N-linked (GlcNAc...) asparagine) is linked at Asn185. Glu203 contributes to the NAD(+) binding site. Intrachain disulfides connect Cys231-Cys252 and Cys264-Cys273. Residue Ser286 is the site of GPI-anchor amidated serine attachment. A propeptide spanning residues Ala287–Ala311 is cleaved from the precursor.

The protein belongs to the ADP-ribosyl cyclase family. Homodimer. Expressed in the bone marrow, spleen and thymus in lymphoid organs, and the lung, kidney and heart in non-lymphoid organs.

The protein localises to the cell membrane. The catalysed reaction is NAD(+) + H2O = ADP-D-ribose + nicotinamide + H(+). The enzyme catalyses NAD(+) = cyclic ADP-beta-D-ribose + nicotinamide + H(+). It carries out the reaction cyclic ADP-beta-D-ribose + H2O = ADP-D-ribose. Functionally, catalyzes both the synthesis of cyclic ADP-beta-D-ribose (cADPR) from NAD(+), and its hydrolysis to ADP-D-ribose (ADPR). Cyclic ADPR is known to serve as an endogenous second messenger that elicits calcium release from intracellular stores, and thus regulates the mobilization of intracellular calcium. May be involved in pre-B-cell growth. This chain is ADP-ribosyl cyclase/cyclic ADP-ribose hydrolase 2 (Bst1), found in Mus musculus (Mouse).